A 188-amino-acid polypeptide reads, in one-letter code: Elongation factor P (188 aa).

The protein belongs to the elongation factor P family.

It is found in the cytoplasm. It participates in protein biosynthesis; polypeptide chain elongation. Its function is as follows. Involved in peptide bond synthesis. Stimulates efficient translation and peptide-bond synthesis on native or reconstituted 70S ribosomes in vitro. Probably functions indirectly by altering the affinity of the ribosome for aminoacyl-tRNA, thus increasing their reactivity as acceptors for peptidyl transferase. This chain is Elongation factor P, found in Rhodopseudomonas palustris (strain BisA53).